Consider the following 409-residue polypeptide: Peptidase T (409 aa).

H78 is a binding site for Zn(2+). D80 is an active-site residue. Position 140 (D140) interacts with Zn(2+). Catalysis depends on E173, which acts as the Proton acceptor. Zn(2+)-binding residues include E174, D196, and H379.

Belongs to the peptidase M20B family. Requires Zn(2+) as cofactor.

The protein localises to the cytoplasm. The catalysed reaction is Release of the N-terminal residue from a tripeptide.. Its function is as follows. Cleaves the N-terminal amino acid of tripeptides. The polypeptide is Peptidase T (Salmonella enteritidis PT4 (strain P125109)).